Reading from the N-terminus, the 378-residue chain is Beta sliding clamp (378 aa).

Belongs to the beta sliding clamp family. In terms of assembly, forms a ring-shaped head-to-tail homodimer around DNA which binds and tethers DNA polymerases and other proteins to the DNA. The DNA replisome complex has a single clamp-loading complex (3 tau and 1 each of delta, delta', psi and chi subunits) which binds 3 Pol III cores (1 core on the leading strand and 2 on the lagging strand) each with a beta sliding clamp dimer. Additional proteins in the replisome are other copies of gamma, psi and chi, Ssb, DNA helicase and RNA primase.

It localises to the cytoplasm. Its function is as follows. Confers DNA tethering and processivity to DNA polymerases and other proteins. Acts as a clamp, forming a ring around DNA (a reaction catalyzed by the clamp-loading complex) which diffuses in an ATP-independent manner freely and bidirectionally along dsDNA. Initially characterized for its ability to contact the catalytic subunit of DNA polymerase III (Pol III), a complex, multichain enzyme responsible for most of the replicative synthesis in bacteria; Pol III exhibits 3'-5' exonuclease proofreading activity. The beta chain is required for initiation of replication as well as for processivity of DNA replication. This chain is Beta sliding clamp (dnaN), found in Streptococcus pneumoniae serotype 4 (strain ATCC BAA-334 / TIGR4).